A 249-amino-acid polypeptide reads, in one-letter code: Imidazole glycerol phosphate synthase subunit HisF (249 aa).

Active-site residues include aspartate 11 and aspartate 130.

It belongs to the HisA/HisF family. In terms of assembly, heterodimer of HisH and HisF.

It is found in the cytoplasm. The enzyme catalyses 5-[(5-phospho-1-deoxy-D-ribulos-1-ylimino)methylamino]-1-(5-phospho-beta-D-ribosyl)imidazole-4-carboxamide + L-glutamine = D-erythro-1-(imidazol-4-yl)glycerol 3-phosphate + 5-amino-1-(5-phospho-beta-D-ribosyl)imidazole-4-carboxamide + L-glutamate + H(+). It functions in the pathway amino-acid biosynthesis; L-histidine biosynthesis; L-histidine from 5-phospho-alpha-D-ribose 1-diphosphate: step 5/9. Its function is as follows. IGPS catalyzes the conversion of PRFAR and glutamine to IGP, AICAR and glutamate. The HisF subunit catalyzes the cyclization activity that produces IGP and AICAR from PRFAR using the ammonia provided by the HisH subunit. The chain is Imidazole glycerol phosphate synthase subunit HisF from Exiguobacterium sibiricum (strain DSM 17290 / CCUG 55495 / CIP 109462 / JCM 13490 / 255-15).